Here is a 142-residue protein sequence, read N- to C-terminus: Large ribosomal subunit protein uL13 (142 aa).

The protein belongs to the universal ribosomal protein uL13 family. Part of the 50S ribosomal subunit.

Functionally, this protein is one of the early assembly proteins of the 50S ribosomal subunit, although it is not seen to bind rRNA by itself. It is important during the early stages of 50S assembly. The sequence is that of Large ribosomal subunit protein uL13 from Janthinobacterium sp. (strain Marseille) (Minibacterium massiliensis).